The chain runs to 543 residues: Malate synthase (543 aa).

Arg162 functions as the Proton acceptor in the catalytic mechanism. Asp449 serves as the catalytic Proton donor.

The protein belongs to the malate synthase family.

It catalyses the reaction glyoxylate + acetyl-CoA + H2O = (S)-malate + CoA + H(+). Its pathway is carbohydrate metabolism; glyoxylate cycle; (S)-malate from isocitrate: step 2/2. This chain is Malate synthase (masA), found in Dictyostelium discoideum (Social amoeba).